The following is a 381-amino-acid chain: Acetylornithine deacetylase (381 aa).

His-78 is a binding site for Zn(2+). Asp-80 is an active-site residue. Asp-110 is a binding site for Zn(2+). Residue Glu-142 is part of the active site. Glu-143, Glu-167, and His-353 together coordinate Zn(2+).

Belongs to the peptidase M20A family. ArgE subfamily. As to quaternary structure, homodimer. The cofactor is Zn(2+). Co(2+) serves as cofactor. Requires glutathione as cofactor.

Its subcellular location is the cytoplasm. The catalysed reaction is N(2)-acetyl-L-ornithine + H2O = L-ornithine + acetate. It participates in amino-acid biosynthesis; L-arginine biosynthesis; L-ornithine from N(2)-acetyl-L-ornithine (linear): step 1/1. Catalyzes the hydrolysis of the amide bond of N(2)-acetylated L-amino acids. Cleaves the acetyl group from N-acetyl-L-ornithine to form L-ornithine, an intermediate in L-arginine biosynthesis pathway, and a branchpoint in the synthesis of polyamines. In Moritella profunda, this protein is Acetylornithine deacetylase.